We begin with the raw amino-acid sequence, 431 residues long: 3'3'-cGAMP-specific phosphodiesterase 1 (431 aa).

The HD domain occupies 39-155 (DINHGHRVGY…IFLADRVDYL (117 aa)). Residues 231–427 (GVEEIMSIAM…YYQLSIAESP (197 aa)) form the HD-GYP domain. Residues His-288 and Asp-289 each contribute to the a divalent metal cation site. The Proton donor role is filled by Lys-292. Residues His-317, His-341, His-342, and Asp-370 each coordinate a divalent metal cation.

As to quaternary structure, monomer. Ca(2+) serves as cofactor. The cofactor is Mg(2+).

It catalyses the reaction 3',3'-cGAMP + H2O = 5'-pApG-3' + H(+). The enzyme catalyses 5'-pApG-3' + H2O = 5'-ApG-3' + phosphate. Phosphodiesterase (PDE) that catalyzes the hydrolysis of 3'3'-cyclic GMP-AMP (3'3'-cGAMP), leading to linear 5'-pApG. Also displays 5'-nucleotidase activity, further hydrolyzing 5'-pApG to 5'-ApG. Counteracts the function of the 3'3'-cGAMP synthase DncV, and is involved in the modulation of intracellular 3'3'-cGAMP levels. Enhances bacterial chemotaxis and inhibits intestinal colonization in vivo. Thus exerts a crucial role in regulating bacterial infectivity through catalyzing 3'3'-cGAMP degradation. Is specific for 3'3'-cGAMP since it cannot degrade other cGAMP linkage isomers (3'2'-, 2'3'-, and 2'2'-cGAMPs). Is also able to hydrolyze c-di-GMP but not c-di-AMP. The polypeptide is 3'3'-cGAMP-specific phosphodiesterase 1 (Vibrio cholerae serotype O1 (strain ATCC 39315 / El Tor Inaba N16961)).